The chain runs to 651 residues: Transcription termination factor FttA (651 aa).

The tract at residues 1–200 (MTFLIKRETQ…ITGLGGFREV (200 aa)) is archaeal CPSF-KH domain. Residues 12–79 (DQILRDIRAV…ISVRPDPEVL (68 aa)) are KHa. Residues 80–147 (LPPEEAEKLI…WAPKVVRTPP (68 aa)) form a KHb region. Residues 188–398 (WIRITGLGGF…LVMESTYGGA (211 aa)) are metallo-beta-lactamase N-terminus. 6 residues coordinate Zn(2+): H256, H258, D260, H261, H344, and D367. The beta-Casp stretch occupies residues 399–592 (NDIQMPREEA…MEVHTIDGFS (194 aa)). The segment at 593-651 (GHADRRELMNYVAKVRPRPERIITVHGEPQKCLDLATSIHRKFGISTRAPNNLDTIRLR) is metallo-beta-lactamase C-terminus. H618 lines the Zn(2+) pocket.

Belongs to the metallo-beta-lactamase superfamily. RNA-metabolizing metallo-beta-lactamase-like family. FttA subfamily. In terms of assembly, homodimer. Interacts with RNA polymerase (RNAP), interacts with the Spt4-Spt5 complex. Zn(2+) is required as a cofactor.

In terms of biological role, terminates transcription on the whole genome. Termination is linked to FttA-mediated RNA cleavage and does not require NTP hydrolysis. Cleaves endonucleolytically at the RNA exit channel of RNA polymerase (RNAP); the 5'-3' exonuclease activity of this protein degrades the nascent RNA released from RNAP. Its function is as follows. Has nuclease activity on single-stranded RNA. The polypeptide is Transcription termination factor FttA (Pyrococcus horikoshii (strain ATCC 700860 / DSM 12428 / JCM 9974 / NBRC 100139 / OT-3)).